We begin with the raw amino-acid sequence, 241 residues long: Large ribosomal subunit protein uL3 (241 aa).

Disordered regions lie at residues 140 to 162 (SHRSIGSTGGRQDPGKTFKNKKM) and 217 to 241 (PLPGKFRENGASAPATEAPAAEETA). Gln-151 is modified (N5-methylglutamine). Residues 229-241 (APATEAPAAEETA) are compositionally biased toward low complexity.

This sequence belongs to the universal ribosomal protein uL3 family. In terms of assembly, part of the 50S ribosomal subunit. Forms a cluster with proteins L14 and L19. Post-translationally, methylated by PrmB.

Functionally, one of the primary rRNA binding proteins, it binds directly near the 3'-end of the 23S rRNA, where it nucleates assembly of the 50S subunit. This chain is Large ribosomal subunit protein uL3, found in Methylobacterium radiotolerans (strain ATCC 27329 / DSM 1819 / JCM 2831 / NBRC 15690 / NCIMB 10815 / 0-1).